The sequence spans 428 residues: Palmitoyltransferase ZDHHC23-B (428 aa).

The Cytoplasmic segment spans residues 1–82; sequence MSIMKKRSSR…RVPWISGARQ (82 aa). Residues 83–99 traverse the membrane as a helical segment; that stretch reads IDVSLIPPLILLPVFLH. Over 100-105 the chain is Lumenal; that stretch reads IAALHY. A helical membrane pass occupies residues 106-125; sequence LLGIIMLTAMPITVLWYYFF. The Cytoplasmic portion of the chain corresponds to 126-132; the sequence is THRKKGR. Residues 133-153 form a helical membrane-spanning segment; that stretch reads TLFFLGLALFSLFYMFYLFLT. At 154–160 the chain is on the lumenal side; it reads QVVPRGE. A helical transmembrane segment spans residues 161–181; the sequence is VTELQLAVVTAGVALTVIFLM. The Cytoplasmic segment spans residues 182 to 294; it reads LTKRGPGLVR…SCVGLANHRT (113 aa). One can recognise a DHHC domain in the interval 250-300; the sequence is NWCAVCKVVRPQRAGHCRICGVCVLRLDHHCVWINSCVGLANHRTFLLTLL. C280 acts as the S-palmitoyl cysteine intermediate in catalysis. A helical transmembrane segment spans residues 295–315; it reads FLLTLLFFLLTSIYGISLVLA. Residues 316-350 are Lumenal-facing; that stretch reads SVCPDQRVLTALFYCPDVYSQYSSALCFTCAWYSS. The chain crosses the membrane as a helical span at residues 351 to 371; the sequence is IVTGGLLHLLLLQILNISLNV. Over 372–428 the chain is Cytoplasmic; the sequence is TEREARLALREKSAQRRLWGLIVHTGHYSRGFWSNWTEFLTMTEDTQPAGHKTEDLV.

This sequence belongs to the DHHC palmitoyltransferase family.

It is found in the golgi apparatus membrane. It localises to the golgi apparatus. The protein resides in the trans-Golgi network membrane. The catalysed reaction is L-cysteinyl-[protein] + hexadecanoyl-CoA = S-hexadecanoyl-L-cysteinyl-[protein] + CoA. In terms of biological role, palmitoyltransferase that could catalyze the addition of palmitate onto various protein substrates and be involved in a variety of cellular processes. The sequence is that of Palmitoyltransferase ZDHHC23-B from Danio rerio (Zebrafish).